The chain runs to 524 residues: Acetyl-CoA hydrolase (524 aa).

275 to 279 (GIGNI) contributes to the CoA binding site. The 5-glutamyl coenzyme A thioester intermediate role is filled by glutamate 300. CoA contacts are provided by asparagine 390 and glycine 394.

It belongs to the acetyl-CoA hydrolase/transferase family.

Its subcellular location is the cytoplasm. The catalysed reaction is acetyl-CoA + H2O = acetate + CoA + H(+). Its function is as follows. Presumably involved in regulating the intracellular acetyl-CoA pool for fatty acid and cholesterol synthesis and fatty acid oxidation. The protein is Acetyl-CoA hydrolase (ACH1) of Candida albicans (strain SC5314 / ATCC MYA-2876) (Yeast).